The chain runs to 302 residues: Dermonecrotic toxin LiSicTox-alphaIA2bii (302 aa).

A signal peptide spans 1–14; sequence IALILVCWSVLSQA. The propeptide occupies 15–22; the sequence is AQTDVEGR. The active site involves His34. Glu54 and Asp56 together coordinate Mg(2+). His70 functions as the Nucleophile in the catalytic mechanism. Disulfide bonds link Cys74/Cys80 and Cys76/Cys219. Position 114 (Asp114) interacts with Mg(2+). An N-linked (GlcNAc...) asparagine glycan is attached at Asn279.

Belongs to the arthropod phospholipase D family. Class II subfamily. The cofactor is Mg(2+). Expressed by the venom gland.

The protein resides in the secreted. The catalysed reaction is an N-(acyl)-sphingosylphosphocholine = an N-(acyl)-sphingosyl-1,3-cyclic phosphate + choline. The enzyme catalyses an N-(acyl)-sphingosylphosphoethanolamine = an N-(acyl)-sphingosyl-1,3-cyclic phosphate + ethanolamine. It carries out the reaction a 1-acyl-sn-glycero-3-phosphocholine = a 1-acyl-sn-glycero-2,3-cyclic phosphate + choline. It catalyses the reaction a 1-acyl-sn-glycero-3-phosphoethanolamine = a 1-acyl-sn-glycero-2,3-cyclic phosphate + ethanolamine. Dermonecrotic toxins cleave the phosphodiester linkage between the phosphate and headgroup of certain phospholipids (sphingolipid and lysolipid substrates), forming an alcohol (often choline) and a cyclic phosphate. This toxin acts on sphingomyelin (SM). It may also act on ceramide phosphoethanolamine (CPE), lysophosphatidylcholine (LPC) and lysophosphatidylethanolamine (LPE), but not on lysophosphatidylserine (LPS), and lysophosphatidylglycerol (LPG). It acts by transphosphatidylation, releasing exclusively cyclic phosphate products as second products. Induces dermonecrosis, hemolysis, increased vascular permeability, edema, inflammatory response, and platelet aggregation. This Loxosceles intermedia (Brown spider) protein is Dermonecrotic toxin LiSicTox-alphaIA2bii.